The sequence spans 351 residues: Uroporphyrinogen decarboxylase (351 aa).

Substrate contacts are provided by residues 26-30, aspartate 76, tyrosine 153, serine 208, and histidine 323; that span reads RQAGR.

This sequence belongs to the uroporphyrinogen decarboxylase family. Homodimer.

The protein resides in the cytoplasm. The enzyme catalyses uroporphyrinogen III + 4 H(+) = coproporphyrinogen III + 4 CO2. Its pathway is porphyrin-containing compound metabolism; protoporphyrin-IX biosynthesis; coproporphyrinogen-III from 5-aminolevulinate: step 4/4. Functionally, catalyzes the decarboxylation of four acetate groups of uroporphyrinogen-III to yield coproporphyrinogen-III. This is Uroporphyrinogen decarboxylase from Prochlorococcus marinus (strain MIT 9211).